A 934-amino-acid chain; its full sequence is Bifunctional uridylyltransferase/uridylyl-removing enzyme (934 aa).

Positions 1-379 are uridylyltransferase; the sequence is MSAHDLKLEE…TFSRRKRKLS (379 aa). Positions 380 to 736 are uridylyl-removing; the sequence is DDGAFISENH…AKPHAFEAVT (357 aa). Positions 496-613 constitute an HD domain; sequence VDEHLLRCIA…IDFADTVQTM (118 aa). ACT domains follow at residues 737-818 and 848-931; these read EITV…DMLA and VIEV…RSPQ.

The protein belongs to the GlnD family. It depends on Mg(2+) as a cofactor.

The enzyme catalyses [protein-PII]-L-tyrosine + UTP = [protein-PII]-uridylyl-L-tyrosine + diphosphate. It carries out the reaction [protein-PII]-uridylyl-L-tyrosine + H2O = [protein-PII]-L-tyrosine + UMP + H(+). With respect to regulation, uridylyltransferase (UTase) activity is inhibited by glutamine, while glutamine activates uridylyl-removing (UR) activity. Modifies, by uridylylation and deuridylylation, the PII regulatory proteins (GlnB and homologs), in response to the nitrogen status of the cell that GlnD senses through the glutamine level. Under low glutamine levels, catalyzes the conversion of the PII proteins and UTP to PII-UMP and PPi, while under higher glutamine levels, GlnD hydrolyzes PII-UMP to PII and UMP (deuridylylation). Thus, controls uridylylation state and activity of the PII proteins, and plays an important role in the regulation of nitrogen assimilation and metabolism. The chain is Bifunctional uridylyltransferase/uridylyl-removing enzyme from Brucella ovis (strain ATCC 25840 / 63/290 / NCTC 10512).